We begin with the raw amino-acid sequence, 200 residues long: MTSAETASRAAESGGTPVRPCSRPHRAPSPAAPSRPGAPAAGPRKLLVPGLPCLVRGGWPWTRPDSSPFRPAARPRMSPHRSPAVARRCGRPRRRDPRRRRTPALPRPWPGRGGPGRSLLHRHLFIQQLLRTCWPALPRDRTPAPGGTMPGAALAGPGRQASGSPAPQSEGAPPRPWTPLQPGLHHRPPSSSSGLLSSFF.

Composition is skewed to low complexity over residues Met-1–Ser-13 and Pro-28–Arg-44. Disordered stretches follow at residues Met-1–Gly-116 and Leu-137–Phe-200. Over residues Arg-88 to Thr-102 the composition is skewed to basic residues. Over residues Pro-189–Phe-200 the composition is skewed to low complexity.

This is an uncharacterized protein from Homo sapiens (Human).